The chain runs to 965 residues: Kinesin-like protein KIN-7K, chloroplastic (965 aa).

The interval 1 to 69 is disordered; that stretch reads MASRQGSKSR…PQTAQRSKEN (69 aa). Residues 19–28 show a composition bias toward low complexity; it reads STASSTTSSS. A compositionally biased stretch (polar residues) spans 29-38; sequence KLYQETSIDG. Over residues 40–56 the composition is skewed to low complexity; that stretch reads SSPASSSAQSKQQFFSP. Residues 69–388 enclose the Kinesin motor domain; the sequence is NVTVTVRFRP…LKFAHRAKHI (320 aa). 149–156 is a binding site for ATP; it reads GVTSSGKT. Residues 389–483 are a coiled coil; that stretch reads EIQAEQNKII…LTKLILVSTK (95 aa). The segment covering 551-561 has biased composition (basic residues); the sequence is LLNWLKPKKRD. Disordered stretches follow at residues 551-633 and 842-888; these read LLNW…KMSD and ATQK…ELRM. Positions 564–577 are enriched in low complexity; the sequence is SSASDQSSVVKSNS. Residues 606–623 are compositionally biased toward basic and acidic residues; the sequence is SEPREDREALEDSSHEME. Coiled coils occupy residues 628-703 and 738-846; these read SNKM…FVMT and NRII…TQKS. Residues 851-862 are compositionally biased toward low complexity; the sequence is RNKTGTTTNVRN. Residues 864 to 888 show a composition bias toward basic and acidic residues; sequence GRRESLAKRQEHDSPSMELKRELRM. The stretch at 896-931 forms a coiled coil; that stretch reads YEAALGEKEQREAELERILEETKQREAYLENELANM. A disordered region spans residues 942–965; it reads QGADSEISDSISETRQTEQTEGSF. A compositionally biased stretch (polar residues) spans 949 to 965; sequence SDSISETRQTEQTEGSF.

It belongs to the TRAFAC class myosin-kinesin ATPase superfamily. Kinesin family. KIN-7 subfamily.

It is found in the plastid. The protein resides in the chloroplast. This chain is Kinesin-like protein KIN-7K, chloroplastic, found in Arabidopsis thaliana (Mouse-ear cress).